The sequence spans 214 residues: Putative F-box protein At3g58910 (214 aa).

Residues 1 to 47 (MDRVSSLPDELLCHILSFLTTKETALTSLLSKREIIPLIKSVVFPTL) enclose the F-box domain.

The sequence is that of Putative F-box protein At3g58910 from Arabidopsis thaliana (Mouse-ear cress).